The following is a 361-amino-acid chain: Mannose-1-phosphate guanyltransferase (361 aa).

It belongs to the transferase hexapeptide repeat family.

The protein localises to the cytoplasm. The enzyme catalyses alpha-D-mannose 1-phosphate + GTP + H(+) = GDP-alpha-D-mannose + diphosphate. It functions in the pathway nucleotide-sugar biosynthesis; GDP-alpha-D-mannose biosynthesis; GDP-alpha-D-mannose from alpha-D-mannose 1-phosphate (GTP route): step 1/1. Its function is as follows. Involved in cell wall synthesis where it is required for glycosylation. Involved in cell cycle progression through cell-size checkpoint. The chain is Mannose-1-phosphate guanyltransferase (MPG1) from Kluyveromyces lactis (strain ATCC 8585 / CBS 2359 / DSM 70799 / NBRC 1267 / NRRL Y-1140 / WM37) (Yeast).